The following is a 297-amino-acid chain: Ribosomal protein L11 methyltransferase (297 aa).

S-adenosyl-L-methionine contacts are provided by Thr152, Gly173, Asp195, and Asn234.

It belongs to the methyltransferase superfamily. PrmA family.

It localises to the cytoplasm. The enzyme catalyses L-lysyl-[protein] + 3 S-adenosyl-L-methionine = N(6),N(6),N(6)-trimethyl-L-lysyl-[protein] + 3 S-adenosyl-L-homocysteine + 3 H(+). Functionally, methylates ribosomal protein L11. The chain is Ribosomal protein L11 methyltransferase from Cupriavidus taiwanensis (strain DSM 17343 / BCRC 17206 / CCUG 44338 / CIP 107171 / LMG 19424 / R1) (Ralstonia taiwanensis (strain LMG 19424)).